The sequence spans 528 residues: NAC domain-containing protein 13 (528 aa).

Residues 10–160 enclose the NAC domain; the sequence is LAPGFRFHPT…AYVLYKIYKK (151 aa). A DNA-binding region spans residues 107-166; it reads VGEKKTLVFHRGRAPNGERTNWVMHEYTLHKEELKRCGGEDVKDAYVLYKIYKKSGSGPK. The tract at residues 388–419 is disordered; that stretch reads EAPGTGDSSEFLNPVPSGISTTNEDDPSKDES. The chain crosses the membrane as a helical span at residues 499–519; the sequence is FFCLSIIGALCALFWVIIGTM.

As to quaternary structure, interacts with RCD1. In terms of tissue distribution, expressed in roots, rosette leaves, shoot apex, stems and flowers.

It localises to the endoplasmic reticulum membrane. The protein localises to the nucleus. Its function is as follows. Transcriptional activator activated by proteolytic cleavage through regulated intramembrane proteolysis (RIP). Involved in oxidative stress tolerance by mediating regulation of mitochondrial retrograde signaling during mitochondrial dysfunction. Interacts directly with the mitochondrial dysfunction DNA consensus motif 5'-CTTGNNNNNCA[AC]G-3', a cis-regulatory elements of several mitochondrial retrograde regulation-induced genes, and triggers increased oxidative stress tolerance. This Arabidopsis thaliana (Mouse-ear cress) protein is NAC domain-containing protein 13.